Reading from the N-terminus, the 50-residue chain is Light-harvesting protein B-880 alpha chain (50 aa).

Topologically, residues 1–12 (MYKLWLLFDPRR) are cytoplasmic. A helical membrane pass occupies residues 13-33 (ALVALSAFLFVLALIIHFIAL). Histidine 29 is a binding site for a bacteriochlorophyll. Residues 34 to 50 (STDRFNWLEGKPAVKAA) lie on the Periplasmic side of the membrane.

The protein belongs to the antenna complex alpha subunit family. The core complex is formed by different alpha and beta chains, binding bacteriochlorophyll molecules, and arranged most probably in tetrameric structures disposed around the reaction center. The non-pigmented gamma chains may constitute additional components.

It localises to the cell inner membrane. In terms of biological role, antenna complexes are light-harvesting systems, which transfer the excitation energy to the reaction centers. This chain is Light-harvesting protein B-880 alpha chain, found in Rhodoblastus acidophilus (Rhodopseudomonas acidophila).